Here is a 328-residue protein sequence, read N- to C-terminus: Pyruvate dehydrogenase E1 component subunit beta (328 aa).

E60 lines the thiamine diphosphate pocket. K(+) contacts are provided by I113, I162, and N166.

As to quaternary structure, heterodimer of an alpha and a beta chain. Thiamine diphosphate is required as a cofactor.

The protein resides in the plastid. The protein localises to the chloroplast. The enzyme catalyses N(6)-[(R)-lipoyl]-L-lysyl-[protein] + pyruvate + H(+) = N(6)-[(R)-S(8)-acetyldihydrolipoyl]-L-lysyl-[protein] + CO2. Its function is as follows. The pyruvate dehydrogenase complex catalyzes the overall conversion of pyruvate to acetyl-CoA and CO(2). It contains multiple copies of three enzymatic components: pyruvate dehydrogenase (E1), dihydrolipoamide acetyltransferase (E2) and lipoamide dehydrogenase (E3). This chain is Pyruvate dehydrogenase E1 component subunit beta (pdhB), found in Staurastrum punctulatum (Green alga).